A 436-amino-acid polypeptide reads, in one-letter code: Hydrogenobyrinate a,c-diamide synthase (436 aa).

In terms of domain architecture, GATase cobBQ-type spans 244–435 (RIAVARDDAF…MHVIDFSGEA (192 aa)). Cys-327 acts as the Nucleophile in catalysis.

This sequence belongs to the CobB/CbiA family. It depends on Mg(2+) as a cofactor.

The catalysed reaction is hydrogenobyrinate + 2 L-glutamine + 2 ATP + 2 H2O = hydrogenobyrinate a,c-diamide + 2 L-glutamate + 2 ADP + 2 phosphate + 2 H(+). It participates in cofactor biosynthesis; adenosylcobalamin biosynthesis; cob(II)yrinate a,c-diamide from precorrin-2 (aerobic route): step 9/10. In terms of biological role, catalyzes the ATP-dependent amidation of the two carboxylate groups at positions a and c of hydrogenobyrinate, using either L-glutamine or ammonia as the nitrogen source. This Brucella ovis (strain ATCC 25840 / 63/290 / NCTC 10512) protein is Hydrogenobyrinate a,c-diamide synthase.